We begin with the raw amino-acid sequence, 548 residues long: Asparagine--tRNA ligase, cytoplasmic (548 aa).

The disordered stretch occupies residues 1-25 (MVLAELYVSDREGSDATGDGTKEKP). A compositionally biased stretch (basic and acidic residues) spans 8–25 (VSDREGSDATGDGTKEKP). Residue S61 is modified to Phosphoserine. Residues 69–91 (MWHREQMKSESREKKEAEDSLRR) are disordered. Basic and acidic residues predominate over residues 71 to 91 (HREQMKSESREKKEAEDSLRR). K244 carries the N6-acetyllysine modification. S482 is modified (phosphoserine). Position 490 is an N6-acetyllysine (K490).

The protein belongs to the class-II aminoacyl-tRNA synthetase family. In terms of assembly, homodimer.

It is found in the cytoplasm. It carries out the reaction tRNA(Asn) + L-asparagine + ATP = L-asparaginyl-tRNA(Asn) + AMP + diphosphate + H(+). Its function is as follows. Catalyzes the attachment of asparagine to tRNA(Asn) in a two-step reaction: asparagine is first activated by ATP to form Asn-AMP and then transferred to the acceptor end of tRNA(Asn). In addition to its essential role in protein synthesis, acts as a signaling molecule that induced migration of CCR3-expressing cells. Has an essential role in the development of the cerebral cortex, being required for proper proliferation of radial glial cells. The polypeptide is Asparagine--tRNA ligase, cytoplasmic (Homo sapiens (Human)).